Here is a 1469-residue protein sequence, read N- to C-terminus: ATP-binding cassette transporter abc4 (1469 aa).

The next 8 helical transmembrane spans lie at 21–40 (SLYYSLSDFSLSAISIFPTH), 55–74 (YSLESGLVCLYLYLIYRWIT), 94–114 (HGILLWLLSILFLGMTAFMFV), 121–141 (AFSDPPVKICLLAYSVHLFLL), 160–180 (VLLNLLLLPPIFHFYSYPFFF), 189–209 (YSPFLWFYFFITIVGNFIPLF), 296–316 (ILGMGVSSFMVSVCQFLSPIA), and 337–357 (WIVLLLTGPFLTSLFTQFYLF). Positions 296–580 (ILGMGVSSFM…IAYLMRQIVQ (285 aa)) constitute an ABC transmembrane type-1 1 domain. N-linked (GlcNAc...) asparagine glycosylation is present at Asn386. 2 consecutive transmembrane segments (helical) span residues 412–432 (EFIHIIVRAPVEIAGSIYLLQ) and 441–461 (VGLALTVLTCSVPIVLGPLVA). Asn510 carries an N-linked (GlcNAc...) asparagine glycan. The next 2 helical transmembrane spans lie at 524 to 544 (VLVESLPVFSMFATFVVFTTI) and 553 to 573 (IAFTSISLFSFIRTQFSWIAY). The ABC transporter 1 domain occupies 611-840 (IGFFNASLTW…LAEQAASASE (230 aa)). A glycan (N-linked (GlcNAc...) asparagine) is linked at Asn615. An ATP-binding site is contributed by 648 to 655 (GPTGSGKS). 3 N-linked (GlcNAc...) asparagine glycosylation sites follow: Asn691, Asn790, and Asn815. The chain crosses the membrane as a helical span at residues 894-914 (GFYVAAVLLFFVTTQATSILI). The 280-residue stretch at 897-1176 (VAAVLLFFVT…FVRSCNSLQA (280 aa)) folds into the ABC transmembrane type-1 2 domain. Asn923 carries an N-linked (GlcNAc...) asparagine glycan. The chain crosses the membrane as a helical span at residues 936–956 (FLFVYGTMLLAYSLLDFLRTV). Asn1007 is a glycosylation site (N-linked (GlcNAc...) asparagine). Helical transmembrane passes span 1009–1029 (SGWLFFSINCFLSVAGGILSV), 1033–1053 (MPIFMIPAVIVCLAGYYFGLL), 1065–1085 (ISIYTSPIFSLLGESIVGVSV), 1120–1140 (VAVRTDGISGLVGAIAGLIAL), and 1148–1168 (GVVGFSLNQAVIFSSSVLLFV). The ABC transporter 2 domain occupies 1214–1453 (FNHVSVSYSA…NGHFRRMCDG (240 aa)). 1246-1253 (GRTGSGKS) lines the ATP pocket. Asn1355 carries N-linked (GlcNAc...) asparagine glycosylation.

It belongs to the ABC transporter superfamily. ABCC family. Conjugate transporter (TC 3.A.1.208) subfamily.

Its subcellular location is the vacuole membrane. It carries out the reaction ATP + H2O + xenobioticSide 1 = ADP + phosphate + xenobioticSide 2.. Functionally, involved in detoxification of xenobiotics, and vacuolar sequestration of glutathione S-conjugates. Together with abc2, required for accumulation of a red pigment (ade pigment) in the vacuole of a mutant affected in the adenine biosynthetic pathway. This is ATP-binding cassette transporter abc4 from Schizosaccharomyces pombe (strain 972 / ATCC 24843) (Fission yeast).